We begin with the raw amino-acid sequence, 316 residues long: HPr kinase/phosphorylase (316 aa).

Catalysis depends on residues His141 and Lys162. 156-163 is an ATP binding site; that stretch reads GESGVGKS. Ser163 lines the Mg(2+) pocket. Asp180 (proton acceptor; for phosphorylation activity. Proton donor; for dephosphorylation activity) is an active-site residue. An important for the catalytic mechanism of both phosphorylation and dephosphorylation region spans residues 204-213; sequence MEIRGIGIID. A Mg(2+)-binding site is contributed by Glu205. Residue Arg246 is part of the active site. Positions 267–272 are important for the catalytic mechanism of dephosphorylation; it reads PVKVGR.

The protein belongs to the HPrK/P family. Homohexamer. It depends on Mg(2+) as a cofactor.

The enzyme catalyses [HPr protein]-L-serine + ATP = [HPr protein]-O-phospho-L-serine + ADP + H(+). It catalyses the reaction [HPr protein]-O-phospho-L-serine + phosphate + H(+) = [HPr protein]-L-serine + diphosphate. Its function is as follows. Catalyzes the ATP- as well as the pyrophosphate-dependent phosphorylation of a specific serine residue in HPr, a phosphocarrier protein of the phosphoenolpyruvate-dependent sugar phosphotransferase system (PTS). HprK/P also catalyzes the pyrophosphate-producing, inorganic phosphate-dependent dephosphorylation (phosphorolysis) of seryl-phosphorylated HPr (P-Ser-HPr). The two antagonistic activities of HprK/P are regulated by several intracellular metabolites, which change their concentration in response to the absence or presence of rapidly metabolisable carbon sources (glucose, fructose, etc.) in the growth medium. Therefore, by controlling the phosphorylation state of HPr, HPrK/P is a sensor enzyme that plays a major role in the regulation of carbon metabolism and sugar transport: it mediates carbon catabolite repression (CCR), and regulates PTS-catalyzed carbohydrate uptake and inducer exclusion. The sequence is that of HPr kinase/phosphorylase from Lactobacillus delbrueckii subsp. bulgaricus (strain ATCC 11842 / DSM 20081 / BCRC 10696 / JCM 1002 / NBRC 13953 / NCIMB 11778 / NCTC 12712 / WDCM 00102 / Lb 14).